Consider the following 193-residue polypeptide: Ubiquitin-conjugating enzyme E2 E1 (193 aa).

The disordered stretch occupies residues 1–45; that stretch reads MSDDDSRASTSSSSSSSSNQQTEKETNTPKKKESKVSMSKNSKLL. An N-acetylserine modification is found at Ser-2. Low complexity predominate over residues 8-18; the sequence is ASTSSSSSSSS. Residues 22–35 are compositionally biased toward basic and acidic residues; it reads TEKETNTPKKKESK. Residues 36–45 show a composition bias toward polar residues; the sequence is VSMSKNSKLL. One can recognise a UBC core domain in the interval 47–193; sequence TSAKRIQKEL…ARQWTKRYAT (147 aa). Cys-131 functions as the Glycyl thioester intermediate in the catalytic mechanism. A Glycyl lysine isopeptide (Lys-Gly) (interchain with G-Cter in ISG15) cross-link involves residue Lys-136.

Belongs to the ubiquitin-conjugating enzyme family. As to quaternary structure, interacts with RNF14. ISGylation suppresses ubiquitin E2 enzyme activity. In terms of processing, autoubiquitinated in vitro.

Its subcellular location is the nucleus. The enzyme catalyses S-ubiquitinyl-[E1 ubiquitin-activating enzyme]-L-cysteine + [E2 ubiquitin-conjugating enzyme]-L-cysteine = [E1 ubiquitin-activating enzyme]-L-cysteine + S-ubiquitinyl-[E2 ubiquitin-conjugating enzyme]-L-cysteine.. The catalysed reaction is S-ubiquitinyl-[E1 ubiquitin-activating enzyme]-L-cysteine + [acceptor protein]-L-lysine = [E1 ubiquitin-activating enzyme]-L-cysteine + N(6)-monoubiquitinyl-[acceptor protein]-L-lysine.. Its pathway is protein modification; protein ubiquitination. In terms of biological role, accepts ubiquitin from the E1 complex and catalyzes its covalent attachment to other proteins. Catalyzes the covalent attachment of ISG15 to other proteins. Mediates the selective degradation of short-lived and abnormal proteins. In vitro also catalyzes 'Lys-48'-linked polyubiquitination. Catalyzes monoubiquitination of other proteins in both an E3-dependent and E3-independent manner. In Homo sapiens (Human), this protein is Ubiquitin-conjugating enzyme E2 E1.